Consider the following 466-residue polypeptide: cGMP-specific 3',5'-cGMP phosphodiesterase 3 (466 aa).

A compositionally biased stretch (low complexity) spans 1–120 (MAPQQNIMKQ…NSNNNNSNNN (120 aa)). A disordered region spans residues 1-150 (MAPQQNIMKQ…NNNKIRGYND (150 aa)). A compositionally biased stretch (acidic residues) spans 123 to 134 (DDEEEEGDDEDN). A compositionally biased stretch (low complexity) spans 135–150 (NNNNNSNNNKIRGYND). The region spanning 137–458 (NNNSNNNKIR…EIWSNNGSSS (322 aa)) is the PDEase domain. The active-site Proton donor is histidine 213. Positions 217, 253, 254, and 364 each coordinate a divalent metal cation.

This sequence belongs to the cyclic nucleotide phosphodiesterase family. A divalent metal cation is required as a cofactor.

It localises to the cytoplasm. The protein localises to the cytosol. It carries out the reaction 3',5'-cyclic GMP + H2O = GMP + H(+). Its activity is regulated as follows. Inhibited by 3-isobutyl-1-methylxanthine (IBMX). Phosphodiesterase specific for cGMP, which is not activated by cGMP. Involved in the degradation of intracellular cGMP. The sequence is that of cGMP-specific 3',5'-cGMP phosphodiesterase 3 (pde3) from Dictyostelium discoideum (Social amoeba).